The primary structure comprises 622 residues: MPSAKKRDSPSVDRRDRLTLAKLASYDDIATDALVDRAYFWTNTRKNRTKYNPMRGIVDDDVARVLLHDVIVAKDLAKAERELLAMSGLKKFMARLPNNREKDWFRRHLRKYIQMYLPDSPFEITTTNRYTITEYEAAVCARKFIKQGQEIKYLSGTLVPMTREEERDLDLKRKDFSIVMSSRKKTPSFFLGPARFANHDCNANGKLVTRGSEGMQVVATRDIYIGEEITVSYGDDYFGIDNCECLCLTCERLVRNGWAPHVPSEPQSKASTPALNDDTLSTDSHVSSKKRKFAPDSDIETSAPSTPCKRGKFVRQSSKLKSEVSFLEVATSIEQPAGPSPVCNGSDMGALGNSTVESDNDKAVDPALPSPPADSPPSTAANESERSSTSTTATSVCDAAVKIKVEETIEQSAEKVSALSEANVELPTTSLRSGSTEGDTKLELSDQPSTLKQGSIGSNRKERRKSRGKPLVVESVEAERQLVRVPGDYTKTSKLLAQTYDRWVDCHTCNAWFVQHDSYLTRRECPRCERHSMLYGYRWPKTDKEGPSDDEERVMDHRTVHRFLYPEEEALISRKDRGVSFGVTPTPELSEPRTETEGSEGCEDRRTTRASRRRTRSLRMTM.

Residues 120 to 234 form the SET domain; that stretch reads SPFEITTTNR…IGEEITVSYG (115 aa). Disordered stretches follow at residues 262–314, 335–394, 427–470, and 576–622; these read VPSE…GKFV, QPAG…TTAT, PTTS…RGKP, and DRGV…RMTM. The segment covering 265–285 has biased composition (polar residues); that stretch reads EPQSKASTPALNDDTLSTDSH. The span at 376–394 shows a compositional bias: low complexity; it reads PPSTAANESERSSTSTTAT. Polar residues-rich tracts occupy residues 427-437 and 446-458; these read PTTSLRSGSTE and DQPSTLKQGSIGS. The span at 590-607 shows a compositional bias: basic and acidic residues; that stretch reads SEPRTETEGSEGCEDRRT. The span at 608–622 shows a compositional bias: basic residues; that stretch reads TRASRRRTRSLRMTM.

The protein belongs to the class V-like SAM-binding methyltransferase superfamily. Histone-lysine methyltransferase family. Suvar4-20 subfamily.

The protein localises to the nucleus. Its subcellular location is the chromosome. It carries out the reaction L-lysyl(20)-[histone H4] + 3 S-adenosyl-L-methionine = N(6),N(6),N(6)-trimethyl-L-lysyl(20)-[histone H4] + 3 S-adenosyl-L-homocysteine + 3 H(+). Functionally, histone methyltransferase that trimethylates 'Lys-20' of histone H4 to form H4K20me3. This Aspergillus fumigatus (strain ATCC MYA-4609 / CBS 101355 / FGSC A1100 / Af293) (Neosartorya fumigata) protein is Histone-lysine N-methyltransferase set9 (set9).